Consider the following 425-residue polypeptide: NAD kinase 2, mitochondrial (425 aa).

A mitochondrion-targeting transit peptide spans 1–45 (MDTSAIQQTLVKIYQRQAWQPPRKASKNETTVGKPRELAGGGSPA). The disordered stretch occupies residues 20–46 (QPPRKASKNETTVGKPRELAGGGSPAD). Lysine 59 bears the N6-acetyllysine; alternate mark. N6-succinyllysine; alternate is present on lysine 59. Serine 171 carries the phosphoserine modification. Lysine 285 is modified (N6-succinyllysine). The residue at position 300 (lysine 300) is an N6-acetyllysine; alternate. Lysine 300 bears the N6-succinyllysine; alternate mark. Serine 350 is subject to Phosphoserine. Lysine 380 bears the N6-acetyllysine mark.

Belongs to the NAD kinase family. Homodimer.

It localises to the mitochondrion. It catalyses the reaction NAD(+) + ATP = ADP + NADP(+) + H(+). Inhibited by NADH, NADPH and NADP(+). Mitochondrial NAD(+) kinase that phosphorylates NAD(+) to yield NADP(+). Can use both ATP or inorganic polyphosphate as the phosphoryl donor. The polypeptide is NAD kinase 2, mitochondrial (Nadk2) (Rattus norvegicus (Rat)).